The primary structure comprises 473 residues: NADH-quinone oxidoreductase subunit N (473 aa).

The next 14 membrane-spanning stretches (helical) occupy residues 3–23 (LHYL…LVIA), 30–50 (LAFY…CSLL), 62–82 (FSSM…FLWL), 99–119 (FYLL…SEHF), 120–140 (ASFF…IAYS), 153–173 (YLIL…IVYL), 195–215 (MLFT…LSLV), 230–252 (LPTT…WKLF), 262–282 (IVLT…NLLA), 291–311 (ILAF…FLFN), 326–346 (ALLF…SILM), 368–388 (AASL…LGFM), 408–428 (FLVI…MVML), and 444–464 (VASL…PALF).

It belongs to the complex I subunit 2 family. As to quaternary structure, NDH-1 is composed of 13 different subunits. Subunits NuoA, H, J, K, L, M, N constitute the membrane sector of the complex.

The protein localises to the cell inner membrane. It carries out the reaction a quinone + NADH + 5 H(+)(in) = a quinol + NAD(+) + 4 H(+)(out). Its function is as follows. NDH-1 shuttles electrons from NADH, via FMN and iron-sulfur (Fe-S) centers, to quinones in the respiratory chain. The immediate electron acceptor for the enzyme in this species is believed to be ubiquinone. Couples the redox reaction to proton translocation (for every two electrons transferred, four hydrogen ions are translocated across the cytoplasmic membrane), and thus conserves the redox energy in a proton gradient. In Shewanella woodyi (strain ATCC 51908 / MS32), this protein is NADH-quinone oxidoreductase subunit N.